The following is a 224-amino-acid chain: Small ribosomal subunit protein uS5 (224 aa).

The tract at residues 1–38 is disordered; sequence MAEQSAGGQGAPEGRDSRDSREGRGRRDGGRGGRDSDK. Over residues 13–38 the composition is skewed to basic and acidic residues; that stretch reads EGRDSRDSREGRGRRDGGRGGRDSDK. Residues 41-104 enclose the S5 DRBM domain; it reads YLERVVAINR…EEARKGFFRV (64 aa).

This sequence belongs to the universal ribosomal protein uS5 family. In terms of assembly, part of the 30S ribosomal subunit. Contacts proteins S4 and S8.

In terms of biological role, with S4 and S12 plays an important role in translational accuracy. Its function is as follows. Located at the back of the 30S subunit body where it stabilizes the conformation of the head with respect to the body. This chain is Small ribosomal subunit protein uS5, found in Mycobacterium ulcerans (strain Agy99).